A 276-amino-acid chain; its full sequence is NAD kinase (276 aa).

D67 acts as the Proton acceptor in catalysis. Residues 67–68 (DG), R72, 136–137 (ND), K147, R164, D166, 177–182 (TAYALS), A201, and Q235 each bind NAD(+).

It belongs to the NAD kinase family. Requires a divalent metal cation as cofactor.

Its subcellular location is the cytoplasm. The catalysed reaction is NAD(+) + ATP = ADP + NADP(+) + H(+). Functionally, involved in the regulation of the intracellular balance of NAD and NADP, and is a key enzyme in the biosynthesis of NADP. Catalyzes specifically the phosphorylation on 2'-hydroxyl of the adenosine moiety of NAD to yield NADP. The chain is NAD kinase from Thermococcus sibiricus (strain DSM 12597 / MM 739).